Here is a 144-residue protein sequence, read N- to C-terminus: Protein archease (144 aa).

Residues Asp-14, Asp-143, and Ile-144 each coordinate Ca(2+).

It belongs to the archease family.

Its function is as follows. Activates the tRNA-splicing ligase complex by facilitating the enzymatic turnover of catalytic subunit RtcB. Acts by promoting the guanylylation of RtcB, a key intermediate step in tRNA ligation. Can also alter the NTP specificity of RtcB such that ATP, dGTP or ITP is used efficiently. The chain is Protein archease from Aeropyrum pernix (strain ATCC 700893 / DSM 11879 / JCM 9820 / NBRC 100138 / K1).